The following is a 201-amino-acid chain: RILP-like protein 2 (201 aa).

The 95-residue stretch at 14–108 (SPEMALDKDP…LRDGPQMGVG (95 aa)) folds into the RH1 domain. Residues 67 to 155 (LEMLEALVNQ…AQDELQCYKS (89 aa)) are a coiled coil. Positions 121–197 (RPRFTLQELR…TVKSLFSFKQ (77 aa)) constitute an RH2 domain. Residues 175–201 (TSSPRSNASKEKSTVKSLFSFKQGKNT) are disordered.

Belongs to the RILPL family.

It localises to the cytoplasm. The protein resides in the cytosol. The protein localises to the cytoskeleton. It is found in the microtubule organizing center. Its subcellular location is the centrosome. It localises to the cell projection. The protein resides in the cilium. Its function is as follows. Involved in cell shape and neuronal morphogenesis, positively regulating the establishment and maintenance of dendritic spines. Plays a role in cellular protein transport. The protein is RILP-like protein 2 (rilpl2) of Xenopus laevis (African clawed frog).